Consider the following 141-residue polypeptide: Protein X (141 aa).

A disordered region spans residues Gly22 to Asp52. Residues Pro33 to Ser48 show a composition bias toward low complexity. Residues Pro68–Leu113 are mitochondrial targeting sequence.

This sequence belongs to the orthohepadnavirus protein X family. In terms of assembly, may form homodimer. May interact with host CEBPA, CFLAR, CREB1, DDB1, E4F1, HBXIP, HSPD1/HSP60, NFKBIA, POLR2E and SMAD4. Interacts with host SMC5-SMC6 complex and induces its degradation. Interacts with host TRPC4AP; leading to prevent ubiquitination of TRPC4AP. Interacts with host PLSCR1; this interaction promotes ubiquitination and degradation of HBx and impairs HBx-mediated cell proliferation. A fraction may be phosphorylated in insect cells and HepG2 cells, a human hepatoblastoma cell line. Phosphorylated in vitro by host protein kinase C or mitogen-activated protein kinase. N-acetylated in insect cells.

The protein resides in the host cytoplasm. It localises to the host nucleus. It is found in the host mitochondrion. Functionally, multifunctional protein that plays a role in silencing host antiviral defenses and promoting viral transcription. Does not seem to be essential for HBV infection. May be directly involved in development of cirrhosis and liver cancer (hepatocellular carcinoma). Most of cytosolic activities involve modulation of cytosolic calcium. The effect on apoptosis is controversial depending on the cell types in which the studies have been conducted. May induce apoptosis by localizing in mitochondria and causing loss of mitochondrial membrane potential. May also modulate apoptosis by binding host CFLAR, a key regulator of the death-inducing signaling complex (DISC). Promotes viral transcription by using the host E3 ubiquitin ligase DDB1 to target the SMC5-SMC6 complex to proteasomal degradation. This host complex would otherwise bind to viral episomal DNA, and prevents its transcription. Moderately stimulates transcription of many different viral and cellular transcription elements. Promoters and enhancers stimulated by HBx contain DNA binding sites for NF-kappa-B, AP-1, AP-2, c-EBP, ATF/CREB, or the calcium-activated factor NF-AT. In Woodchuck hepatitis B virus (isolate w64/pWS23) (WHV), this protein is Protein X.